We begin with the raw amino-acid sequence, 400 residues long: Mu-type opioid receptor (400 aa).

At 1–68 the chain is on the extracellular side; sequence MDSSAAPTNA…CPPTGSPSMI (68 aa). N-linked (GlcNAc...) asparagine glycosylation is found at N9, N12, N33, N40, and N48. The helical transmembrane segment at 69 to 93 threads the bilayer; that stretch reads TAITIMALYSIVCVVGLFGNFLVMY. Topologically, residues 94–106 are cytoplasmic; that stretch reads VIVRYTKMKTATN. The helical transmembrane segment at 107–131 threads the bilayer; the sequence is IYIFNLALADALATSTLPFQSVNYL. Topologically, residues 132–142 are extracellular; that stretch reads MGTWPFGTILC. The cysteines at positions 142 and 219 are disulfide-linked. The helical transmembrane segment at 143–165 threads the bilayer; it reads KIVISIDYYNMFTSIFTLCTMSV. Topologically, residues 166-185 are cytoplasmic; it reads DRYIAVCHPVKALDFRTPRN. Y168 bears the Phosphotyrosine mark. Residues 186–207 traverse the membrane as a helical segment; it reads AKIINVCNWILSSAIGLPVMFM. Residues 208 to 230 are Extracellular-facing; it reads ATTKYRQGSIDCTLTFSHPTWYW. Residues 231–255 form a helical membrane-spanning segment; that stretch reads ENLLKICVFIFAFIMPVLIITVCYG. Over 256 to 279 the chain is Cytoplasmic; it reads LMILRLKSVRMLSGSKEKDRNLRR. Residues 280–306 form a helical membrane-spanning segment; the sequence is ITRMVLVVVAVFIVCWTPIHIYVIIKA. The Extracellular segment spans residues 307-314; sequence LVTIPETT. Residues 315–338 traverse the membrane as a helical segment; that stretch reads FQTVSWHFCIALGYTNSCLNPVLY. The NPxxY; plays a role in stabilizing the activated conformation of the receptor signature appears at 334-338; sequence NPVLY. The Cytoplasmic segment spans residues 339–400; sequence AFLDENFKRC…NLEAETAPLP (62 aa). A lipid anchor (S-palmitoyl cysteine) is attached at C353. S365 carries the phosphoserine modification. The residue at position 372 (T372) is a Phosphothreonine. Residue S377 is modified to Phosphoserine. A Phosphothreonine modification is found at T396.

This sequence belongs to the G-protein coupled receptor 1 family. In terms of assembly, forms homooligomers and heterooligomers with other GPCRs, such as OPRD1, OPRK1, OPRL1, NPFFR2, ADRA2A, SSTR2, CNR1 and CCR5 (probably in dimeric forms). Interacts with heterotrimeric G proteins; interaction with a heterotrimeric complex containing GNAI1, GNB1 and GNG2 stabilizes the active conformation of the receptor and increases its affinity for endomorphin-2, the synthetic opioid peptide DAMGO and for morphinan agonists. Interacts with PPL; the interaction disrupts agonist-mediated G-protein activation. Interacts (via C-terminus) with DNAJB4 (via C-terminus). Interacts with calmodulin; the interaction inhibits the constitutive activity of OPRM1; it abolishes basal and attenuates agonist-stimulated G-protein coupling. Interacts with FLNA, PLD2, RANBP9 and WLS and GPM6A. Interacts with RTP4. Interacts with SYP and GNAS. Interacts with RGS9, RGS17, RGS20, RGS4, PPP1R9B and HINT1. Phosphorylated. Differentially phosphorylated in basal and agonist-induced conditions. Agonist-mediated phosphorylation modulates receptor internalization. Phosphorylated by GRK2 in a agonist-dependent manner. Phosphorylation at Tyr-168 requires receptor activation, is dependent on non-receptor protein tyrosine kinase Src and results in a decrease in agonist efficacy by reducing G-protein coupling efficiency. Phosphorylated on tyrosine residues; the phosphorylation is involved in agonist-induced G-protein-independent receptor down-regulation. Phosphorylation at Ser-377 is involved in G-protein-dependent but not beta-arrestin-dependent activation of the ERK pathway. In terms of processing, ubiquitinated. A basal ubiquitination seems not to be related to degradation. Ubiquitination is increased upon formation of OPRM1:OPRD1 oligomers leading to proteasomal degradation; the ubiquitination is diminished by RTP4. In terms of tissue distribution, expressed in brain. Isoform 16 and isoform 17 are detected in brain.

It localises to the cell membrane. The protein localises to the cell projection. Its subcellular location is the axon. The protein resides in the perikaryon. It is found in the dendrite. It localises to the endosome. The protein localises to the cytoplasm. Functionally, receptor for endogenous opioids such as beta-endorphin and endomorphin. Receptor for natural and synthetic opioids including morphine, heroin, DAMGO, fentanyl, etorphine, buprenorphin and methadone. Also activated by enkephalin peptides, such as Met-enkephalin or Met-enkephalin-Arg-Phe, with higher affinity for Met-enkephalin-Arg-Phe. Agonist binding to the receptor induces coupling to an inactive GDP-bound heterotrimeric G-protein complex and subsequent exchange of GDP for GTP in the G-protein alpha subunit leading to dissociation of the G-protein complex with the free GTP-bound G-protein alpha and the G-protein beta-gamma dimer activating downstream cellular effectors. The agonist- and cell type-specific activity is predominantly coupled to pertussis toxin-sensitive G(i) and G(o) G alpha proteins, GNAI1, GNAI2, GNAI3 and GNAO1 isoforms Alpha-1 and Alpha-2, and to a lesser extent to pertussis toxin-insensitive G alpha proteins GNAZ and GNA15. They mediate an array of downstream cellular responses, including inhibition of adenylate cyclase activity and both N-type and L-type calcium channels, activation of inward rectifying potassium channels, mitogen-activated protein kinase (MAPK), phospholipase C (PLC), phosphoinositide/protein kinase (PKC), phosphoinositide 3-kinase (PI3K) and regulation of NF-kappa-B. Also couples to adenylate cyclase stimulatory G alpha proteins. The selective temporal coupling to G-proteins and subsequent signaling can be regulated by RGSZ proteins, such as RGS9, RGS17 and RGS4. Phosphorylation by members of the GPRK subfamily of Ser/Thr protein kinases and association with beta-arrestins is involved in short-term receptor desensitization. Beta-arrestins associate with the GPRK-phosphorylated receptor and uncouple it from the G-protein thus terminating signal transduction. The phosphorylated receptor is internalized through endocytosis via clathrin-coated pits which involves beta-arrestins. The activation of the ERK pathway occurs either in a G-protein-dependent or a beta-arrestin-dependent manner and is regulated by agonist-specific receptor phosphorylation. Acts as a class A G-protein coupled receptor (GPCR) which dissociates from beta-arrestin at or near the plasma membrane and undergoes rapid recycling. Receptor down-regulation pathways are varying with the agonist and occur dependent or independent of G-protein coupling. Endogenous ligands induce rapid desensitization, endocytosis and recycling. Heterooligomerization with other GPCRs can modulate agonist binding, signaling and trafficking properties. Its function is as follows. Couples to GNAS and is proposed to be involved in excitatory effects. Does not bind agonists but may act through oligomerization with binding-competent OPRM1 isoforms and reduce their ligand binding activity. In Homo sapiens (Human), this protein is Mu-type opioid receptor (OPRM1).